The chain runs to 190 residues: MTVTPRLAHFVLQTNQLPAMTQWYIDVLGAHVVYENPAMCFLTTDEEHHRVALFGPPGGGLPERTPATVGLAHTAFTFPTLGDLIDKYLQLRDKGIEPRVPVQHGVTTSLYYRDPDGNMVELQIDNFATPEESTDYMHGEEYTTDTIGPSFNPLALAEAYKAGVPESELTTRAWALKTEQINVMERMLTP.

One can recognise a VOC domain in the interval 6–125 (RLAHFVLQTN…DGNMVELQID (120 aa)). Fe cation-binding residues include His-9, His-73, and Glu-121.

The protein belongs to the extradiol ring-cleavage dioxygenase family. As to quaternary structure, homohexamer. Requires Fe(2+) as cofactor.

The catalysed reaction is biphenyl-2,3-diol + O2 = 2-hydroxy-6-oxo-6-phenylhexa-2,4-dienoate + H(+). It functions in the pathway xenobiotic degradation; biphenyl degradation; 2-hydroxy-2,4-pentadienoate and benzoate from biphenyl: step 3/4. The protein is Biphenyl-2,3-diol 1,2-dioxygenase 3 (bphC3) of Rhodococcus globerulus.